The primary structure comprises 240 residues: MRGILITIEGINGVGKSTQAMRLKKALECMDYNAVCIRFPNPDTTTGGLILQVLNKMTEMSSEQLHKLFTKHHSEFSAEIAALLKLNFIVIVDHYIWSGLAYAQADGITIETKNIFKPDYTFFLSSKKPLNEKPLTLQRLFETKEKQETIFTNFTIIMNDVPKNRLCIIPATLNKEIIHTMILTKTIKVFDNNSCLNYIKMYDDKYLNVQDLNLFDFDWQKCIEDNNDKEEYDDDDGFII.

10-17 is an ATP binding site; the sequence is GINGVGKS.

Belongs to the thymidylate kinase family.

It catalyses the reaction dTMP + ATP = dTDP + ADP. It participates in pyrimidine metabolism; dTTP biosynthesis. Functionally, catalyzes the conversion of dTMP to dTDP. This African swine fever virus (strain Badajoz 1971 Vero-adapted) (Ba71V) protein is Thymidylate kinase (TMK).